A 272-amino-acid polypeptide reads, in one-letter code: Glutamate racemase (272 aa).

Substrate contacts are provided by residues 16–17 (DS) and 48–49 (YG). Cysteine 79 (proton donor/acceptor) is an active-site residue. 80 to 81 (NT) lines the substrate pocket. Residue cysteine 191 is the Proton donor/acceptor of the active site. 192–193 (TH) contacts substrate.

It belongs to the aspartate/glutamate racemases family.

It catalyses the reaction L-glutamate = D-glutamate. It participates in cell wall biogenesis; peptidoglycan biosynthesis. In terms of biological role, provides the (R)-glutamate required for cell wall biosynthesis. The sequence is that of Glutamate racemase from Chlorobaculum parvum (strain DSM 263 / NCIMB 8327) (Chlorobium vibrioforme subsp. thiosulfatophilum).